Reading from the N-terminus, the 77-residue chain is Large ribosomal subunit protein bL28 (77 aa).

Belongs to the bacterial ribosomal protein bL28 family.

The sequence is that of Large ribosomal subunit protein bL28 from Dechloromonas aromatica (strain RCB).